Reading from the N-terminus, the 390-residue chain is Probable galacturonosyltransferase-like 9 (390 aa).

The Cytoplasmic segment spans residues 1–10; that stretch reads MRLRFPMKSA. Residues 11–31 traverse the membrane as a helical; Signal-anchor for type II membrane protein segment; sequence VLAFAIFLVFIPLFSVGIRMI. Over 32 to 390 the chain is Lumenal; it reads PGRLTAVSAT…SELTEDSSFF (359 aa). N-linked (GlcNAc...) asparagine glycans are attached at residues N205 and N223.

This sequence belongs to the glycosyltransferase 8 family.

Its subcellular location is the golgi apparatus membrane. It participates in glycan metabolism; pectin biosynthesis. Its function is as follows. May be involved in pectin and/or xylans biosynthesis in cell walls. This Arabidopsis thaliana (Mouse-ear cress) protein is Probable galacturonosyltransferase-like 9 (GATL9).